A 692-amino-acid polypeptide reads, in one-letter code: Glycine--tRNA ligase beta subunit (692 aa).

Belongs to the class-II aminoacyl-tRNA synthetase family. Tetramer of two alpha and two beta subunits.

The protein resides in the cytoplasm. It catalyses the reaction tRNA(Gly) + glycine + ATP = glycyl-tRNA(Gly) + AMP + diphosphate. This is Glycine--tRNA ligase beta subunit from Pseudoalteromonas atlantica (strain T6c / ATCC BAA-1087).